A 464-amino-acid polypeptide reads, in one-letter code: Zinc transporter 6-A (464 aa).

Over methionine 1–lysine 33 the chain is Cytoplasmic. Residues isoleucine 34–serine 54 form a helical membrane-spanning segment. Residues threonine 55–threonine 64 lie on the Extracellular side of the membrane. The chain crosses the membrane as a helical span at residues tyrosine 65–methionine 85. The Cytoplasmic portion of the chain corresponds to lysine 86–arginine 98. The helical transmembrane segment at phenylalanine 99–leucine 119 threads the bilayer. Residues lysine 120–threonine 134 are Extracellular-facing. Residues glycine 135–isoleucine 155 form a helical membrane-spanning segment. Over arginine 156–proline 200 the chain is Cytoplasmic. The helical transmembrane segment at phenylalanine 201–isoleucine 221 threads the bilayer. Residues asparagine 222 to asparagine 223 lie on the Extracellular side of the membrane. The helical transmembrane segment at tyrosine 224–tyrosine 244 threads the bilayer. Residues proline 245 to glutamine 464 are Cytoplasmic-facing.

Belongs to the cation diffusion facilitator (CDF) transporter (TC 2.A.4) family. SLC30A subfamily. Heterodimer with SLC30A5; form a functional zinc ion transmembrane transporter.

It is found in the golgi apparatus. The protein localises to the trans-Golgi network membrane. Functionally, has probably no intrinsic transporter activity but together with SLC30A5 forms a functional zinc ion:proton antiporter heterodimer, mediating zinc entry into the lumen of organelles along the secretory pathway. As part of that zinc ion:proton antiporter, contributes to zinc ion homeostasis within the early secretory pathway and regulates the activation and folding of enzymes like alkaline phosphatases and enzymes involved in phosphatidylinositol glycan anchor biosynthesis. The protein is Zinc transporter 6-A (slc30a6-a) of Xenopus laevis (African clawed frog).